The sequence spans 225 residues: Cytidylate kinase (225 aa).

Residue 11-19 participates in ATP binding; it reads GPAGAGKST.

It belongs to the cytidylate kinase family. Type 1 subfamily.

It localises to the cytoplasm. It carries out the reaction CMP + ATP = CDP + ADP. The enzyme catalyses dCMP + ATP = dCDP + ADP. The polypeptide is Cytidylate kinase (Shouchella clausii (strain KSM-K16) (Alkalihalobacillus clausii)).